The primary structure comprises 206 residues: Urease accessory protein UreG (206 aa).

Gly13 to Thr20 contacts GTP.

It belongs to the SIMIBI class G3E GTPase family. UreG subfamily. As to quaternary structure, homodimer. UreD, UreF and UreG form a complex that acts as a GTP-hydrolysis-dependent molecular chaperone, activating the urease apoprotein by helping to assemble the nickel containing metallocenter of UreC. The UreE protein probably delivers the nickel.

It is found in the cytoplasm. In terms of biological role, facilitates the functional incorporation of the urease nickel metallocenter. This process requires GTP hydrolysis, probably effectuated by UreG. The polypeptide is Urease accessory protein UreG (Haloquadratum walsbyi (strain DSM 16790 / HBSQ001)).